A 1502-amino-acid chain; its full sequence is G patch domain-containing protein 8 (1502 aa).

One can recognise a G-patch domain in the interval 40-86 (SDNIGHRLLQKHGWKLGQGLGKSLQGRTDPIPIVVKYDVMGMGRMEM). Residues 89-124 (DYAEDATERRRVLEVEKEDTEELRQKYKDYVDKEKA) adopt a coiled-coil conformation. The C2H2-type zinc-finger motif lies at 136-160 (FYCELCDKQYQKHQEFDNHINSYDH). The disordered stretch occupies residues 172 to 251 (REFARNVSSR…GATASCGLGS (80 aa)). Residues 182–206 (SRKDEKKQEKALRRLHELAEQRKQA) show a composition bias toward basic and acidic residues. A compositionally biased stretch (acidic residues) spans 223–233 (VDEEGGEDDKD). Residue lysine 311 forms a Glycyl lysine isopeptide (Lys-Gly) (interchain with G-Cter in SUMO2) linkage. Basic and acidic residues-rich tracts occupy residues 323 to 339 (AEEGTSEDGTKPDEKSS) and 424 to 436 (NTTHPKNAPESKK). Disordered stretches follow at residues 323–391 (AEEG…ATEP) and 419–541 (QMDG…FPVL). Residues 459 to 472 (SEVSEQPKETSMTE) show a composition bias toward polar residues. The residue at position 479 (lysine 479) is an N6-acetyllysine. The residue at position 491 (serine 491) is a Phosphoserine. Positions 491–519 (SDQSLESHSQKVSETQMCESNSSKETSLA) are enriched in polar residues. Lysine 577 participates in a covalent cross-link: Glycyl lysine isopeptide (Lys-Gly) (interchain with G-Cter in SUMO2). 2 stretches are compositionally biased toward basic and acidic residues: residues 579–623 (SRNK…EKIV) and 653–670 (SETEDTGRSLPSKKERSG). The interval 579-1301 (SRNKDARTKG…ESTDGAEDAS (723 aa)) is disordered. Serine 653 carries the phosphoserine modification. The span at 671–692 (KSHRHKKKKKHKKSSKHKRKHK) shows a compositional bias: basic residues. Basic and acidic residues predominate over residues 693–707 (ADTEEKSSKAESGEK). Basic residues predominate over residues 708–720 (SKKRKKRKRKKNK). Positions 733-743 (PEPPGSGSPAP) are enriched in pro residues. 3 positions are modified to phosphoserine: serine 738, serine 740, and serine 758. Over residues 750-772 (AQDDSQRRSLPAEEGSSGKKDEG) the composition is skewed to basic and acidic residues. Composition is skewed to basic residues over residues 799–809 (AGTKRSSRSSH) and 852–867 (SRSRSGRRHSSHRSSR). Positions 868–896 (RSYSSSSDASSDQSCYSRQRSYSDDSYSD) are enriched in low complexity. Residues serine 911 and serine 914 each carry the phosphoserine modification. Residues 919–928 (SKHRSKRHKY) show a composition bias toward basic residues. A phosphoserine mark is found at serine 981, serine 1009, serine 1014, serine 1033, and serine 1035. Over residues 1010–1027 (WGHESPEERHSGRRDFIR) the composition is skewed to basic and acidic residues. The span at 1042 to 1059 (GRGEGPGKKDDGRGDDSK) shows a compositional bias: basic and acidic residues. A Phosphoserine modification is found at serine 1081. 2 stretches are compositionally biased toward basic and acidic residues: residues 1093–1108 (LLEKIQSRKVERKPSV) and 1159–1171 (KKCEESGLERGEE). A Glycyl lysine isopeptide (Lys-Gly) (interchain with G-Cter in SUMO2) cross-link involves residue lysine 1105. Serine 1107 is modified (phosphoserine). Serine 1175 carries the post-translational modification Phosphoserine.

This chain is G patch domain-containing protein 8 (GPATCH8), found in Homo sapiens (Human).